An 851-amino-acid chain; its full sequence is MDMDTQEAELSSQLENLTINSPRKLRSNAHSNSGKVFKEYESNHDFQDSNFTSQVVEPAISDSVKKPPTMTVLNNYSTVHQKVPSGFSGTTATSHQEAQWKQYFPGIGSGGGTNFGGAVGTANKVPESDLIVSDLVKDLSGVLETNTFKRHLDMKNKTTTMQTHENHDTISISHSKDFFNAEKVSSSFSDDSDSGPAAEAHDVFDGILQKQKSNYLVGSYPSNSNNKNNNNNNNNNNNNSININNKDNARTKEEDEEDTSNSFEFSSSSSMSSSQTQSGRKSKVLKKPPLNTISPGQLGYQFNHTHGAWDPPLNQGLDVSSSHSLDNTSSNQSQFATMVPTGDNHTNGKAPSILDKKAYELTSTKPGDVGYRQKKIQEEENLANSDDTPLDTPKFNDLFTKNGTRAKVKGQMRTSRSISNSNLLEAHKKLKTFPAERVEDITSISEVNTSFNETEKQLISILTSKLSGSPSYDSDWEKILKVDLSRGKLKNMFGMQRLLPNVLVLNLSDNEMNTLEGIPSNVVQLFCSNNKITSAHCSLAGFHDLECLDLSYNLLNTSLKFLSLCHHLQEVNLSYNSIQSLEGIGSSRMKKLNLSNNEINGIIDFEQLILTNNSVVGGWLTVEVLDLSNNNIIGVRNINCLPRLKVLNLNGNPLVSIVESSKMENGTLRALSIKNTGGALSKLQNYKLDDQFTFPYQNLKILKLDGFAQLSKWQKWPATLQILEINGGLASSLPRFSSLKSTNLYSLTIANVRDFTHLPVDLSKELPFLQELHLPGNNLQNAHKLTKTLPRQSVKFLDLRNNPITTPRHDRASTSLHYRQLLQLAGLCQQQCPALATLWLDDTPAPTATNL.

Disordered regions lie at residues 1–31 (MDMD…NAHS) and 216–352 (LVGS…KAPS). Positions 8–21 (AELSSQLENLTINS) are enriched in polar residues. 2 stretches are compositionally biased toward low complexity: residues 223–246 (NSNN…INNK) and 260–278 (SNSF…QTQS). The segment covering 291–304 (NTISPGQLGYQFNH) has biased composition (polar residues). Positions 320-333 (SSSHSLDNTSSNQS) are enriched in low complexity. Residue lysine 357 forms a Glycyl lysine isopeptide (Lys-Gly) (interchain with G-Cter in ubiquitin) linkage. Phosphothreonine is present on residues threonine 388 and threonine 392. A phosphoserine mark is found at serine 417 and serine 419. LRR repeat units lie at residues 544–566 (DLEC…SLCH), 567–588 (HLQE…GSSR), 589–609 (MKKL…EQLI), 621–642 (TVEV…NCLP), and 643–664 (RLKV…SKME).

As to quaternary structure, interacts directly with MPC54, CNM67, SPO21/MPC70, ADY3 and ADY4. Probable component of a spindle pole boby (SPB) complex composed of ADY3, SSP1, DON1, MPC54, SPO21/MPC70, NUD1 and CNM67. Phosphorylated from S/G2 phase until the end of mitosis.

It localises to the cytoplasm. The protein localises to the cytoskeleton. Its subcellular location is the microtubule organizing center. The protein resides in the spindle pole body. It is found in the nucleus envelope. Functionally, involved in astral microtubule organization by binding SCP72 to the outer plaque in a cell-cycle dependent manner. Required for the mitotic exit by facilitating the binding of TEMP1 to CDC15. Also involved in the pathway that organizes the shaping and sizing of the prospore membrane (PSM) during sporulation. The protein is Protein NUD1 (NUD1) of Saccharomyces cerevisiae (strain ATCC 204508 / S288c) (Baker's yeast).